Reading from the N-terminus, the 458-residue chain is ATP synthase subunit beta (458 aa).

148 to 155 contacts ATP; that stretch reads GGAGVGKT.

The protein belongs to the ATPase alpha/beta chains family. F-type ATPases have 2 components, CF(1) - the catalytic core - and CF(0) - the membrane proton channel. CF(1) has five subunits: alpha(3), beta(3), gamma(1), delta(1), epsilon(1). CF(0) has three main subunits: a(1), b(2) and c(9-12). The alpha and beta chains form an alternating ring which encloses part of the gamma chain. CF(1) is attached to CF(0) by a central stalk formed by the gamma and epsilon chains, while a peripheral stalk is formed by the delta and b chains.

The protein resides in the cell inner membrane. It carries out the reaction ATP + H2O + 4 H(+)(in) = ADP + phosphate + 5 H(+)(out). Functionally, produces ATP from ADP in the presence of a proton gradient across the membrane. The catalytic sites are hosted primarily by the beta subunits. The protein is ATP synthase subunit beta of Francisella philomiragia subsp. philomiragia (strain ATCC 25017 / CCUG 19701 / FSC 153 / O#319-036).